The primary structure comprises 321 residues: NADPH-dependent D-xylose reductase (321 aa).

Tyr-50 (proton donor) is an active-site residue. Substrate is bound at residue His-112. NADP(+)-binding positions include 167–168 (SN), 216–225 (SSFGPQSFVE), and 272–282 (KSNKKERLLGN).

The protein belongs to the aldo/keto reductase family.

It catalyses the reaction xylitol + NAD(+) = D-xylose + NADH + H(+). The enzyme catalyses xylitol + NADP(+) = D-xylose + NADPH + H(+). The protein operates within carbohydrate metabolism; D-xylose degradation. Functionally, reduces D-xylose into xylitol. Preferentially utilizes NADPH as a cosubstrate. This chain is NADPH-dependent D-xylose reductase (XYL1), found in Candida boidinii (Yeast).